The chain runs to 133 residues: Small ribosomal subunit protein uS9 (133 aa).

Residues 111–133 (PRRSESKKFGGPGARARKQKSYR) are disordered.

It belongs to the universal ribosomal protein uS9 family.

In Methanosphaera stadtmanae (strain ATCC 43021 / DSM 3091 / JCM 11832 / MCB-3), this protein is Small ribosomal subunit protein uS9.